A 609-amino-acid polypeptide reads, in one-letter code: Adenine deaminase (609 aa).

Belongs to the metallo-dependent hydrolases superfamily. Adenine deaminase family. Requires Mn(2+) as cofactor.

The enzyme catalyses adenine + H2O + H(+) = hypoxanthine + NH4(+). The sequence is that of Adenine deaminase from Cenarchaeum symbiosum (strain A).